The primary structure comprises 201 residues: FMN-dependent NADH:quinone oxidoreductase (201 aa).

Residues serine 9, 16 to 18, and 93 to 96 each bind FMN; these read SVS and MYNF.

Belongs to the azoreductase type 1 family. Homodimer. FMN is required as a cofactor.

The catalysed reaction is 2 a quinone + NADH + H(+) = 2 a 1,4-benzosemiquinone + NAD(+). The enzyme catalyses N,N-dimethyl-1,4-phenylenediamine + anthranilate + 2 NAD(+) = 2-(4-dimethylaminophenyl)diazenylbenzoate + 2 NADH + 2 H(+). Functionally, quinone reductase that provides resistance to thiol-specific stress caused by electrophilic quinones. Its function is as follows. Also exhibits azoreductase activity. Catalyzes the reductive cleavage of the azo bond in aromatic azo compounds to the corresponding amines. The polypeptide is FMN-dependent NADH:quinone oxidoreductase (Gluconacetobacter diazotrophicus (strain ATCC 49037 / DSM 5601 / CCUG 37298 / CIP 103539 / LMG 7603 / PAl5)).